Here is a 2892-residue protein sequence, read N- to C-terminus: Inositol 1,4,5-trisphosphate receptor itr-1 (2892 aa).

The Cytoplasmic segment spans residues 1-2475; that stretch reads MNPSYGRVRK…YPLPEHSNSS (2475 aa). MIR domains lie at 192 to 246, 319 to 379, 386 to 466, and 490 to 551; these read GNVI…IEPA, QNSV…VQVV, GGTA…LGPT, and NKEV…LLPV. 357–361 serves as a coordination point for 1D-myo-inositol 1,4,5-trisphosphate; it reads RMTNR. Residues 625–628 and 689–691 each bind 1D-myo-inositol 1,4,5-trisphosphate; these read KLLR and YRK. The tract at residues 1030 to 1056 is disordered; that stretch reads MMRGGNKENSKDLAKTPSVTAEEAGRT. Residues 1034–1043 are compositionally biased toward basic and acidic residues; that stretch reads GNKENSKDLA. A helical transmembrane segment spans residues 2476-2496; the sequence is ISLGNLYSWFAVFSSFLLAHY. At 2497–2514 the chain is on the extracellular side; sequence LRHDKIYLHKTSLLILAS. The chain crosses the membrane as a helical span at residues 2515–2535; sequence LCFLLLSSIGVTLTLYIFGIL. The Cytoplasmic portion of the chain corresponds to 2536–2572; the sequence is QLVNKIVHVVAFVSNKGLEDRPIAEILACRNLHYLLV. Residues 2573 to 2593 form a helical membrane-spanning segment; sequence YLFICILGLLVHPMIYCILLF. Residues 2594–2615 lie on the Extracellular side of the membrane; the sequence is DIIFTEETLQNVIASVTRNYQS. The helical transmembrane segment at 2616-2636 threads the bilayer; the sequence is IVWTGLLALILLYFFSILGFL. The Cytoplasmic portion of the chain corresponds to 2637–2735; the sequence is YFRHDFYLEV…FIWRVAYDMT (99 aa). The span at 2655–2666 shows a compositional bias: polar residues; the sequence is ATISSGIPSETC. The segment at 2655–2685 is disordered; the sequence is ATISSGIPSETCPSEGCPGLQPSEKDDNDDE. The helical transmembrane segment at 2736 to 2756 threads the bilayer; the sequence is FFVVLIVIVLNLIFGVIIDTF. Over 2757 to 2892 the chain is Extracellular; that stretch reads GDLRAEKNEK…RAFMEQFQPR (136 aa).

This sequence belongs to the InsP3 receptor family. Interacts with myo-1, myo-2, unc-54/myo-4 and nmy-2. Also interacts with iri-1. Isoform a is expressed in the anterior cells of the pharyngeal terminal bulb, vulva, rectal epithelial cells, spicule protractor muscles of the proctodeum and male-specific neuron CP8 or CP9. Isoform d is expressed in the spermatheca, excretory cell, amphid socket cells, PDA motor neuron, spicule retractor muscles, gubernaculum retractor muscles, posterior oblique muscles, diagonal muscles and the vas deferens. Also expressed in the intestine, pharynx, pharyngeal isthmus, pharyngeal intestinal valve, somatic gonad, hypodermal cells of the vulva, uterine sheath cells, tail, head, LUA motor neuron and the embryonic epidermis (at protein level).

The protein resides in the endoplasmic reticulum membrane. In terms of biological role, receptor for inositol 1,4,5-trisphosphate, a second messenger that regulates intracellular calcium homeostasis. Binds in vitro to both inositol 1,4,5-trisphosphate (1,4,5-InsP3) and inositol 2,4,5-trisphosphate (2,4,5-InsP3) with high affinity and does not discriminate between the phosphate at 1 or 2 position. Can also bind inositol 1,3,4,5-tetrakisphosphate (1,3,4,5-InsP4) and inositol 4,5-bisphosphate (4,5-InsP2), but with lower affinity. Acts as a timekeeper/rhythm generator via calcium signaling, affecting the defecation cycle and pharyngeal pumping. Affects normal hermaphrodite and male fertility as a participant in intracellular signaling by acting downstream of let-23/lin-3 which regulates ovulation, spermathecal valve dilation and male mating behavior. Important for early embryonic development; controls epidermal cell migration and may also regulate filopodial protrusive activity during epithelial morphogenesis. Component of inositol trisphosphate (IP3)-mediated downstream signaling pathways that controls amphid sensory neuronal (ASH)-mediated response to nose touch and benzaldehyde but not other ASH-mediated responses. Involved in modulating lifespan, acting downstream of transcription factor atf-6. This Caenorhabditis elegans protein is Inositol 1,4,5-trisphosphate receptor itr-1.